Consider the following 257-residue polypeptide: Acetylglutamate kinase (257 aa).

Substrate is bound by residues 43-44 (GG), Arg-65, and Asn-157.

It belongs to the acetylglutamate kinase family. ArgB subfamily.

It is found in the cytoplasm. The enzyme catalyses N-acetyl-L-glutamate + ATP = N-acetyl-L-glutamyl 5-phosphate + ADP. It functions in the pathway amino-acid biosynthesis; L-arginine biosynthesis; N(2)-acetyl-L-ornithine from L-glutamate: step 2/4. Catalyzes the ATP-dependent phosphorylation of N-acetyl-L-glutamate. This chain is Acetylglutamate kinase, found in Mannheimia succiniciproducens (strain KCTC 0769BP / MBEL55E).